Consider the following 132-residue polypeptide: Small ribosomal subunit protein uS11 (132 aa).

It belongs to the universal ribosomal protein uS11 family. Part of the 30S ribosomal subunit. Interacts with proteins S7 and S18. Binds to IF-3.

Its function is as follows. Located on the platform of the 30S subunit, it bridges several disparate RNA helices of the 16S rRNA. Forms part of the Shine-Dalgarno cleft in the 70S ribosome. The chain is Small ribosomal subunit protein uS11 from Chlamydia trachomatis serovar D (strain ATCC VR-885 / DSM 19411 / UW-3/Cx).